The primary structure comprises 273 residues: Glucosamine-6-phosphate deaminase (273 aa).

Catalysis depends on D72, which acts as the Proton acceptor; for enolization step. D141 (for ring-opening step) is an active-site residue. H143 (proton acceptor; for ring-opening step) is an active-site residue. E148 functions as the For ring-opening step in the catalytic mechanism.

This sequence belongs to the glucosamine/galactosamine-6-phosphate isomerase family. As to quaternary structure, homohexamer.

It is found in the cytoplasm. It carries out the reaction alpha-D-glucosamine 6-phosphate + H2O = beta-D-fructose 6-phosphate + NH4(+). The protein operates within nucleotide-sugar biosynthesis; UDP-N-acetyl-alpha-D-glucosamine biosynthesis; alpha-D-glucosamine 6-phosphate from D-fructose 6-phosphate: step 1/1. Catalyzes the reversible conversion of alpha-D-glucosamine 6-phosphate (GlcN-6P) into beta-D-fructose 6-phosphate (Fru-6P) and ammonium ion, a regulatory reaction step in de novo uridine diphosphate-N-acetyl-alpha-D-glucosamine (UDP-GlcNAc) biosynthesis via hexosamine pathway. The protein is Glucosamine-6-phosphate deaminase (Gnpda1) of Anopheles gambiae (African malaria mosquito).